Reading from the N-terminus, the 289-residue chain is ATP synthase subunit a (289 aa).

Transmembrane regions (helical) follow at residues Ala-43–Phe-63, Ser-101–Val-121, Leu-160–Ile-180, Ile-193–Ala-213, Val-232–Ile-252, and Ala-259–Val-279.

The protein belongs to the ATPase A chain family. In terms of assembly, F-type ATPases have 2 components, CF(1) - the catalytic core - and CF(0) - the membrane proton channel. CF(1) has five subunits: alpha(3), beta(3), gamma(1), delta(1), epsilon(1). CF(0) has three main subunits: a(1), b(2) and c(9-12). The alpha and beta chains form an alternating ring which encloses part of the gamma chain. CF(1) is attached to CF(0) by a central stalk formed by the gamma and epsilon chains, while a peripheral stalk is formed by the delta and b chains.

It is found in the cell inner membrane. Key component of the proton channel; it plays a direct role in the translocation of protons across the membrane. The sequence is that of ATP synthase subunit a from Pseudomonas syringae pv. tomato (strain ATCC BAA-871 / DC3000).